Here is a 264-residue protein sequence, read N- to C-terminus: Thymidylate synthase (264 aa).

Residue Arg-21 coordinates dUMP. His-51 lines the (6R)-5,10-methylene-5,6,7,8-tetrahydrofolate pocket. 126 to 127 contacts dUMP; sequence RR. The active-site Nucleophile is Cys-146. DUMP-binding positions include 166-169, Asn-177, and 207-209; these read RSCD and HLY. Asp-169 contributes to the (6R)-5,10-methylene-5,6,7,8-tetrahydrofolate binding site. Ala-263 serves as a coordination point for (6R)-5,10-methylene-5,6,7,8-tetrahydrofolate.

Belongs to the thymidylate synthase family. Bacterial-type ThyA subfamily. As to quaternary structure, homodimer.

It is found in the cytoplasm. The catalysed reaction is dUMP + (6R)-5,10-methylene-5,6,7,8-tetrahydrofolate = 7,8-dihydrofolate + dTMP. It participates in pyrimidine metabolism; dTTP biosynthesis. Its function is as follows. Catalyzes the reductive methylation of 2'-deoxyuridine-5'-monophosphate (dUMP) to 2'-deoxythymidine-5'-monophosphate (dTMP) while utilizing 5,10-methylenetetrahydrofolate (mTHF) as the methyl donor and reductant in the reaction, yielding dihydrofolate (DHF) as a by-product. This enzymatic reaction provides an intracellular de novo source of dTMP, an essential precursor for DNA biosynthesis. This is Thymidylate synthase from Shigella flexneri serotype 5b (strain 8401).